The following is a 206-amino-acid chain: N-(5'-phosphoribosyl)anthranilate isomerase (206 aa).

The protein belongs to the TrpF family.

The enzyme catalyses N-(5-phospho-beta-D-ribosyl)anthranilate = 1-(2-carboxyphenylamino)-1-deoxy-D-ribulose 5-phosphate. The protein operates within amino-acid biosynthesis; L-tryptophan biosynthesis; L-tryptophan from chorismate: step 3/5. The chain is N-(5'-phosphoribosyl)anthranilate isomerase from Pseudomonas putida (strain ATCC 47054 / DSM 6125 / CFBP 8728 / NCIMB 11950 / KT2440).